The following is a 401-amino-acid chain: Rho-N domain-containing protein 1, chloroplastic (401 aa).

The N-terminal 63 residues, 1–63 (MAMSGTFHLT…VPNRSSFVCR (63 aa)), are a transit peptide targeting the chloroplast. Disordered regions lie at residues 73 to 129 (PDFS…PGPR) and 180 to 361 (KHSG…EEAV). Polar residues-rich tracts occupy residues 102–126 (DMLSSRNGPLFNLSSSPKFQATSSP), 210–223 (TGNLVTSGNKDNNA), and 240–265 (PRSQSPPAYSSEATFDQSSSYSVTWT). A compositionally biased stretch (basic and acidic residues) spans 266-290 (QKKDTVELHDEPEHEPAYEHEHEPE). Residues 339-358 (LSDDDESLDDADEDSDEAEE) are compositionally biased toward acidic residues. A coiled-coil region spans residues 339-371 (LSDDDESLDDADEDSDEAEEEAVKDLSELKLVE).

In terms of assembly, homodimer or homomultimer. Part of a chloroplastic degradosome-like complex. Interacts with RNE.

Its subcellular location is the plastid. It is found in the chloroplast. In terms of biological role, binds to and supports processing of specific plastid RNAs. Associates via its C-terminal Rho-N domain to single stranded regions of 16S and 23S rRNAs or to rbcL mRNAs. May be involved in targeting transcripts to RNases such as RNE or RNase J. The protein is Rho-N domain-containing protein 1, chloroplastic (RHON1) of Arabidopsis thaliana (Mouse-ear cress).